A 584-amino-acid chain; its full sequence is MADYNTLYHQGLYLSPDQQDLLLAALSSNQPPQKQQNDKQRSQAKTDPDSTPGNMSSGSFSMSPGFNKTHPGSGGLGYGDDESPFLDFNPELDFDFPGSENLIGDLPGSLPSEEHEVGEKRKDMSDNENEESGKKRRESDDKAAKKPGRKPLTSEPTSKRKAQNRAAQRAFRERKEKHLKDLETKVDELQKASDDANQENGLLRAQVERLQVELREYRKRLSWLTTGSGISAMSAIPSAHSRNLYGLNNNDFMFDFPKFGDLPGGHIFNGPLTKSNQNKPRDGSSPATSDSQVPGVMTRETLNGSNNRGMPTAKAANGVSNNPSPKVPSVYNIRQSASSHDSSNSCSPSSSSDSHQSQMLSSNGTSPEPSSNSPATKLNDSVQNHHACTYSTIDGEASFCAQLGMACGNINNPIPAVRGKSESVSNTPSQPNNNYEQTPGPGLDLLAQQNGGQFDPVLFGDWREPQDAILSQDFGTFFDDAFPLPDLGSPSHNFNEVANPQPPKKDLIAEIDNKLDEEVVPGEDKSQMLSCTKIWDRLQSMEKFRNGEIDVDNLCSELRTKARCSEGGVVVNQKDVEDIMGRVK.

Residues 23-179 (LAALSSNQPP…AFRERKEKHL (157 aa)) form a disordered region. The Bipartite nuclear localization signal motif lies at 35–42 (QQNDKQRS). The segment covering 36–48 (QNDKQRSQAKTDP) has biased composition (basic and acidic residues). Residues 52-67 (PGNMSSGSFSMSPGFN) show a composition bias toward low complexity. The Bipartite nuclear localization signal motif lies at 68-75 (KTHPGSGG). Residues 79 to 94 (GDDESPFLDFNPELDF) show a composition bias toward acidic residues. Basic and acidic residues-rich tracts occupy residues 112 to 144 (SEEH…DKAA) and 170 to 179 (AFRERKEKHL). The bZIP domain maps to 154-217 (SEPTSKRKAQ…ERLQVELREY (64 aa)). Residues 159-180 (KRKAQNRAAQRAFRERKEKHLK) form a basic motif region. The tract at residues 182 to 189 (LETKVDEL) is leucine-zipper. A transcription activation 1 region spans residues 211–332 (QVELREYRKR…PSPKVPSVYN (122 aa)). 2 disordered regions span residues 267-379 (IFNG…TKLN) and 418-441 (RGKS…TPGP). Residues 284-296 (SSPATSDSQVPGV) form a n-CRD region. Polar residues predominate over residues 300–309 (ETLNGSNNRG). Over residues 336 to 362 (SASSHDSSNSCSPSSSSDSHQSQMLSS) the composition is skewed to low complexity. Polar residues-rich tracts occupy residues 363 to 379 (NGTS…TKLN) and 422 to 437 (ESVS…NYEQ). The transcription activation 2 stretch occupies residues 377–480 (KLNDSVQNHH…SQDFGTFFDD (104 aa)). 3 cysteine pairs are disulfide-bonded: cysteine 531/cysteine 555, cysteine 531/cysteine 564, and cysteine 555/cysteine 564. Residues 531-564 (CTKIWDRLQSMEKFRNGEIDVDNLCSELRTKARC) are c-CRD. Residues 549–556 (IDVDNLCS) carry the Nuclear export signal motif.

This sequence belongs to the bZIP family. YAP subfamily. Post-translationally, depending on the oxidative stress inducing agent, yap1 can undergo two distinct conformational changes, both involving disulfide bond formation, and both masking the nuclear export signal, thus abolishing nuclear export.

Its subcellular location is the nucleus. The protein resides in the cytoplasm. Its function is as follows. Transcription activator involved in oxidative stress response and redox homeostasis. Regulates the transcription of genes encoding antioxidant enzymes and components of the cellular thiol-reducing pathways. May be involved in antifungal resistance to voriconazole. This Aspergillus flavus (strain ATCC 200026 / FGSC A1120 / IAM 13836 / NRRL 3357 / JCM 12722 / SRRC 167) protein is AP-1-like transcription factor yap1.